Consider the following 474-residue polypeptide: E3 ubiquitin-protein ligase CBL-C (474 aa).

The interval 7–145 is 4H; that stretch reads PWGRQWEEAR…HALFPGGKYC (139 aa). In terms of domain architecture, Cbl-PTB spans 7–321; sequence PWGRQWEEAR…GKTHNPDLTE (315 aa). An EF-hand-like region spans residues 146 to 218; the sequence is GHMYQLTKAP…FEFDVFTRLF (73 aa). Asp-199, Thr-201, and Glu-210 together coordinate Ca(2+). An SH2-like region spans residues 219 to 321; sequence QPWPTLLKNW…GKTHNPDLTE (103 aa). Arg-264 lines the 4-O-phospho-L-tyrosine pocket. The interval 322–350 is linker; the sequence is LGQAEPQQRIHVSEEQLQLYWAMDSTFEL. Phosphotyrosine; by SRC is present on Tyr-341. Residues 351 to 390 form an RING-type zinc finger; it reads CKICAESNKDVKIEPCGHLLCSCCLAAWQHSDSQTCPFCR. Positions 351 to 474 are interaction with RET; it reads CKICAESNKD…ALGPQDPAPA (124 aa). The tract at residues 409–474 is disordered; sequence TAEDSGNSSD…ALGPQDPAPA (66 aa). Residues 432-441 are compositionally biased toward pro residues; it reads SAPPLPPRPD.

In terms of assembly, interacts with ubiquitin-conjugating enzyme E2 UBE2D2 and UBE2D3. Isoform 1 interacts with EGFR (tyrosine phosphorylated). Interacts with the SH3 domain proteins LYN and CRK. Interacts (via RING-type zinc finger) with TGFB1I1 (via LIM zinc-binding domain 2); the interaction is direct and enhances the E3 activity. Interacts directly with RET (inactive) and CD2AP; dissociates from RET upon RET activation by GDNF which also increases the interaction with CD2AP suggesting dissociation as CBLC:CD2AP complex. Interacts with SRC; the interaction is enhanced when SRC is phosphorylated at 'Tyr-419'. Phosphorylated on multiple tyrosine residues by SRC. Isoform 1, but not isoform 2, is phosphorylated on tyrosines by EGFR. In terms of processing, autoubiquitinated when phosphorylated at Tyr-341, enhanced by SRC; suggesting proteasomal degradation. As to expression, ubiquitous.

The enzyme catalyses S-ubiquitinyl-[E2 ubiquitin-conjugating enzyme]-L-cysteine + [acceptor protein]-L-lysine = [E2 ubiquitin-conjugating enzyme]-L-cysteine + N(6)-ubiquitinyl-[acceptor protein]-L-lysine.. Phosphorylation at Tyr-341 is necessary and sufficient for the activation of E3 activity. In terms of biological role, acts as an E3 ubiquitin-protein ligase, which accepts ubiquitin from specific E2 ubiquitin-conjugating enzymes, and then transfers it to substrates promoting their degradation by the proteasome. Functionally coupled with the E2 ubiquitin-protein ligases UB2D1, UB2D2 and UB2D3. Regulator of EGFR mediated signal transduction; upon EGF activation, ubiquitinates EGFR. Isoform 1, but not isoform 2, inhibits EGF stimulated MAPK1 activation. Promotes ubiquitination of SRC phosphorylated at 'Tyr-419'. In collaboration with CD2AP may act as regulatory checkpoint for Ret signaling by modulating the rate of RET degradation after ligand activation; CD2AP converts it from an inhibitor to a promoter of RET degradation; the function limits the potency of GDNF on neuronal survival. The sequence is that of E3 ubiquitin-protein ligase CBL-C (CBLC) from Homo sapiens (Human).